Here is a 229-residue protein sequence, read N- to C-terminus: Cell division protein FtsQ (229 aa).

The chain crosses the membrane as a helical span at residues 1–21; sequence MIVLLCVIFAFLVYSNWHSWL. The Periplasmic portion of the chain corresponds to 22–229; that stretch reads ESLDRNPIRA…AAVGFSPLPK (208 aa). The region spanning 27–97 is the POTRA domain; that stretch reads NPIRAYALTH…DRLSITLIEH (71 aa).

The protein belongs to the FtsQ/DivIB family. FtsQ subfamily. In terms of assembly, part of a complex composed of FtsB, FtsL and FtsQ.

The protein resides in the cell inner membrane. Essential cell division protein. May link together the upstream cell division proteins, which are predominantly cytoplasmic, with the downstream cell division proteins, which are predominantly periplasmic. May control correct divisome assembly. The sequence is that of Cell division protein FtsQ from Actinobacillus pleuropneumoniae serotype 3 (strain JL03).